Reading from the N-terminus, the 226-residue chain is ATP synthase F(0) complex subunit a (226 aa).

Helical transmembrane passes span 12–32 (PTMM…ILFP), 68–88 (WALM…LGLL), 97–117 (QLSM…ITGF), 138–158 (IPML…ALAV), 164–184 (ITAG…LMDI), and 189–209 (AFIT…VALI).

The protein belongs to the ATPase A chain family. In terms of assembly, component of the ATP synthase complex composed at least of ATP5F1A/subunit alpha, ATP5F1B/subunit beta, ATP5MC1/subunit c (homooctomer), MT-ATP6/subunit a, MT-ATP8/subunit 8, ATP5ME/subunit e, ATP5MF/subunit f, ATP5MG/subunit g, ATP5MK/subunit k, ATP5MJ/subunit j, ATP5F1C/subunit gamma, ATP5F1D/subunit delta, ATP5F1E/subunit epsilon, ATP5PF/subunit F6, ATP5PB/subunit b, ATP5PD/subunit d, ATP5PO/subunit OSCP. ATP synthase complex consists of a soluble F(1) head domain (subunits alpha(3) and beta(3)) - the catalytic core - and a membrane F(0) domain - the membrane proton channel (subunits c, a, 8, e, f, g, k and j). These two domains are linked by a central stalk (subunits gamma, delta, and epsilon) rotating inside the F1 region and a stationary peripheral stalk (subunits F6, b, d, and OSCP). Interacts with DNAJC30; interaction is direct.

Its subcellular location is the mitochondrion inner membrane. It carries out the reaction H(+)(in) = H(+)(out). Subunit a, of the mitochondrial membrane ATP synthase complex (F(1)F(0) ATP synthase or Complex V) that produces ATP from ADP in the presence of a proton gradient across the membrane which is generated by electron transport complexes of the respiratory chain. ATP synthase complex consist of a soluble F(1) head domain - the catalytic core - and a membrane F(1) domain - the membrane proton channel. These two domains are linked by a central stalk rotating inside the F(1) region and a stationary peripheral stalk. During catalysis, ATP synthesis in the catalytic domain of F(1) is coupled via a rotary mechanism of the central stalk subunits to proton translocation. With the subunit c (ATP5MC1), forms the proton-conducting channel in the F(0) domain, that contains two crucial half-channels (inlet and outlet) that facilitate proton movement from the mitochondrial intermembrane space (IMS) into the matrix. Protons are taken up via the inlet half-channel and released through the outlet half-channel, following a Grotthuss mechanism. The polypeptide is ATP synthase F(0) complex subunit a (Phoca vitulina (Harbor seal)).